The chain runs to 163 residues: Putative pre-16S rRNA nuclease (163 aa).

Belongs to the YqgF nuclease family.

It is found in the cytoplasm. In terms of biological role, could be a nuclease involved in processing of the 5'-end of pre-16S rRNA. In Nitrobacter hamburgensis (strain DSM 10229 / NCIMB 13809 / X14), this protein is Putative pre-16S rRNA nuclease.